The following is a 64-amino-acid chain: Large ribosomal subunit protein uL1 (64 aa).

It belongs to the universal ribosomal protein uL1 family. In terms of assembly, part of the 50S ribosomal subunit.

Its function is as follows. Binds directly to 23S rRNA. The L1 stalk is quite mobile in the ribosome, and is involved in E site tRNA release. In terms of biological role, protein L1 is also a translational repressor protein, it controls the translation of the L11 operon by binding to its mRNA. This chain is Large ribosomal subunit protein uL1 (rplA), found in Streptomyces lavendulae.